The primary structure comprises 481 residues: Alpha-ketoglutaric semialdehyde dehydrogenase 1 (481 aa).

Residues Trp-154–Asn-155, Lys-178–Glu-181, and Gly-231–Ser-232 each bind NADP(+). Glu-253 acts as the Proton acceptor in catalysis. Leu-254 serves as a coordination point for NADP(+). Catalysis depends on Cys-287, which acts as the Nucleophile. Residue Glu-384 coordinates NADP(+).

The protein belongs to the aldehyde dehydrogenase family. In terms of assembly, homotetramer.

The enzyme catalyses 2,5-dioxopentanoate + NADP(+) + H2O = 2-oxoglutarate + NADPH + 2 H(+). The catalysed reaction is 2,5-dioxopentanoate + NAD(+) + H2O = 2-oxoglutarate + NADH + 2 H(+). It carries out the reaction succinate semialdehyde + NAD(+) + H2O = succinate + NADH + 2 H(+). Catalyzes the NAD(P)(+)-dependent oxidation of alpha-ketoglutaric semialdehyde (alphaKGSA) to alpha-ketoglutarate. Is involved in a degradation pathway of L-arabinose that allows A.brasilense to grow on L-arabinose as a sole carbon source. Prefers NAD(+) to NADP(+) as a cosubstrate. Displays broad substrate specificity: exhibits the highest activity with alphaKGSA and succinic semialdehyde as substrates, but to a lesser extent, is also active with glutaraldehyde, benzaldehyde, and a number of aldehydes from C3 to C8. This is Alpha-ketoglutaric semialdehyde dehydrogenase 1 (araE) from Azospirillum brasilense.